We begin with the raw amino-acid sequence, 301 residues long: Large ribosomal subunit protein uL18y (301 aa).

Positions 247–267 are disordered; the sequence is RAEPNHKKTEKSAPKEHKRYN. A compositionally biased stretch (basic and acidic residues) spans 249–261; that stretch reads EPNHKKTEKSAPK.

This sequence belongs to the universal ribosomal protein uL18 family. In terms of assembly, component of the large ribosomal subunit (LSU).

It localises to the cytoplasm. The protein localises to the nucleus. It is found in the nucleolus. Its subcellular location is the nucleoplasm. Component of the ribosome, a large ribonucleoprotein complex responsible for the synthesis of proteins in the cell. The small ribosomal subunit (SSU) binds messenger RNAs (mRNAs) and translates the encoded message by selecting cognate aminoacyl-transfer RNA (tRNA) molecules. The large subunit (LSU) contains the ribosomal catalytic site termed the peptidyl transferase center (PTC), which catalyzes the formation of peptide bonds, thereby polymerizing the amino acids delivered by tRNAs into a polypeptide chain. The nascent polypeptides leave the ribosome through a tunnel in the LSU and interact with protein factors that function in enzymatic processing, targeting, and the membrane insertion of nascent chains at the exit of the ribosomal tunnel. Seems involved in the regulation of cell proliferation. Essential in leaf polarity establishment, probably having a role for translation in leaf dorsoventral patterning to specify leaf adaxial identity. This chain is Large ribosomal subunit protein uL18y, found in Arabidopsis thaliana (Mouse-ear cress).